Consider the following 61-residue polypeptide: Photosystem II reaction center protein K (61 aa).

The propeptide occupies 1–24 (MLNIFNLICICFNSALFSSSFLFA). The chain crosses the membrane as a helical span at residues 36–56 (IVDFMPVIPVLFFLLAFVWQA).

It belongs to the PsbK family. In terms of assembly, PSII is composed of 1 copy each of membrane proteins PsbA, PsbB, PsbC, PsbD, PsbE, PsbF, PsbH, PsbI, PsbJ, PsbK, PsbL, PsbM, PsbT, PsbX, PsbY, PsbZ, Psb30/Ycf12, at least 3 peripheral proteins of the oxygen-evolving complex and a large number of cofactors. It forms dimeric complexes.

The protein resides in the plastid. It is found in the chloroplast thylakoid membrane. One of the components of the core complex of photosystem II (PSII). PSII is a light-driven water:plastoquinone oxidoreductase that uses light energy to abstract electrons from H(2)O, generating O(2) and a proton gradient subsequently used for ATP formation. It consists of a core antenna complex that captures photons, and an electron transfer chain that converts photonic excitation into a charge separation. In Gossypium barbadense (Sea Island cotton), this protein is Photosystem II reaction center protein K.